The following is a 44-amino-acid chain: uncharacterized protein (44 aa).

It is found in the plastid. Its subcellular location is the chloroplast. This is an uncharacterized protein from Trieres chinensis (Marine centric diatom).